The primary structure comprises 106 residues: uncharacterized protein (106 aa).

The chain crosses the membrane as a helical span at residues 85-101; that stretch reads AVALVLLCVSHHLTYLP.

It is found in the membrane. This is an uncharacterized protein from Saccharomyces cerevisiae (strain ATCC 204508 / S288c) (Baker's yeast).